The primary structure comprises 530 residues: Probable 1,4-beta-D-glucan cellobiohydrolase B (530 aa).

The first 26 residues, 1-26 (MLASTFSYRMYKTALILAALLGSGQA), serve as a signal peptide directing secretion. Residues 27-461 (QQVGTSQAEV…SNIKVGPIGS (435 aa)) are catalytic. Residue E238 is the Nucleophile of the active site. E243 functions as the Proton donor in the catalytic mechanism. N296 carries an N-linked (GlcNAc...) asparagine glycan. A disordered region spans residues 462–492 (TFNSGGSNPGGGTTTTAKPTTTTTTAGSPGG). The tract at residues 462–494 (TFNSGGSNPGGGTTTTAKPTTTTTTAGSPGGTG) is ser/Thr-rich linker. A compositionally biased stretch (low complexity) spans 475 to 488 (TTTAKPTTTTTTAG). A CBM1 domain is found at 494 to 530 (GVAQHYGQCGGNGWQGPTTCASPYTCQKLNDFYSQCL). 2 disulfides stabilise this stretch: C502–C519 and C513–C529.

It belongs to the glycosyl hydrolase 7 (cellulase C) family.

The protein resides in the secreted. It carries out the reaction Hydrolysis of (1-&gt;4)-beta-D-glucosidic linkages in cellulose and cellotetraose, releasing cellobiose from the non-reducing ends of the chains.. The biological conversion of cellulose to glucose generally requires three types of hydrolytic enzymes: (1) Endoglucanases which cut internal beta-1,4-glucosidic bonds; (2) Exocellobiohydrolases that cut the disaccharide cellobiose from the non-reducing end of the cellulose polymer chain; (3) Beta-1,4-glucosidases which hydrolyze the cellobiose and other short cello-oligosaccharides to glucose. The sequence is that of Probable 1,4-beta-D-glucan cellobiohydrolase B (cbhB) from Neosartorya fischeri (strain ATCC 1020 / DSM 3700 / CBS 544.65 / FGSC A1164 / JCM 1740 / NRRL 181 / WB 181) (Aspergillus fischerianus).